The chain runs to 277 residues: Thiazole synthase (277 aa).

Residue K107 is the Schiff-base intermediate with DXP of the active site. 1-deoxy-D-xylulose 5-phosphate contacts are provided by residues G168, 194–195 (AG), and 216–217 (AS).

The protein belongs to the ThiG family. As to quaternary structure, homotetramer. Forms heterodimers with either ThiH or ThiS.

It localises to the cytoplasm. It catalyses the reaction [ThiS sulfur-carrier protein]-C-terminal-Gly-aminoethanethioate + 2-iminoacetate + 1-deoxy-D-xylulose 5-phosphate = [ThiS sulfur-carrier protein]-C-terminal Gly-Gly + 2-[(2R,5Z)-2-carboxy-4-methylthiazol-5(2H)-ylidene]ethyl phosphate + 2 H2O + H(+). It participates in cofactor biosynthesis; thiamine diphosphate biosynthesis. Its function is as follows. Catalyzes the rearrangement of 1-deoxy-D-xylulose 5-phosphate (DXP) to produce the thiazole phosphate moiety of thiamine. Sulfur is provided by the thiocarboxylate moiety of the carrier protein ThiS. In vitro, sulfur can be provided by H(2)S. The sequence is that of Thiazole synthase from Cutibacterium acnes (strain DSM 16379 / KPA171202) (Propionibacterium acnes).